Here is a 1703-residue protein sequence, read N- to C-terminus: Protein TIC 214 (1703 aa).

Helical transmembrane passes span 39-61 (YYGFLTALPIGPSQILSIRTFFL), 67-87 (GIICILGSMMGQFVILLSIYC), 90-110 (LYVMLVKPHLMTLLVIPYMFY), 138-158 (LLLDSFIFQLLNPILLPNPVL), 174-194 (FFLTSSLLGWLCGHILFINSI), and 220-240 (FSILISITFFLYLGRSPVPLI). Disordered regions lie at residues 615 to 643 (GPRKGKLEDKEKEKEKAAQTQTEVKKERE) and 1431 to 1494 (TKEP…WKSK). Residues 618 to 660 (KGKLEDKEKEKEKAAQTQTEVKKEREKEKEERVIKRFQNQSDF) adopt a coiled-coil conformation. Over residues 619-643 (GKLEDKEKEKEKAAQTQTEVKKERE) the composition is skewed to basic and acidic residues.

This sequence belongs to the TIC214 family. As to quaternary structure, part of the Tic complex.

Its subcellular location is the plastid. It localises to the chloroplast inner membrane. Functionally, involved in protein precursor import into chloroplasts. May be part of an intermediate translocation complex acting as a protein-conducting channel at the inner envelope. The chain is Protein TIC 214 from Psilotum nudum (Whisk fern).